The chain runs to 363 residues: Histidinol-phosphate aminotransferase (363 aa).

Position 218 is an N6-(pyridoxal phosphate)lysine (lysine 218).

Belongs to the class-II pyridoxal-phosphate-dependent aminotransferase family. Histidinol-phosphate aminotransferase subfamily. In terms of assembly, homodimer. Pyridoxal 5'-phosphate is required as a cofactor.

It catalyses the reaction L-histidinol phosphate + 2-oxoglutarate = 3-(imidazol-4-yl)-2-oxopropyl phosphate + L-glutamate. It participates in amino-acid biosynthesis; L-histidine biosynthesis; L-histidine from 5-phospho-alpha-D-ribose 1-diphosphate: step 7/9. The polypeptide is Histidinol-phosphate aminotransferase (Xanthomonas euvesicatoria pv. vesicatoria (strain 85-10) (Xanthomonas campestris pv. vesicatoria)).